The sequence spans 413 residues: Imidazolonepropionase (413 aa).

Fe(3+)-binding residues include histidine 77 and histidine 79. Zn(2+) contacts are provided by histidine 77 and histidine 79. 4-imidazolone-5-propanoate is bound by residues arginine 86, tyrosine 149, and histidine 182. Tyrosine 149 is an N-formimidoyl-L-glutamate binding site. Histidine 247 contacts Fe(3+). Histidine 247 contacts Zn(2+). Glutamine 250 is a binding site for 4-imidazolone-5-propanoate. Fe(3+) is bound at residue aspartate 322. Aspartate 322 is a Zn(2+) binding site. 2 residues coordinate N-formimidoyl-L-glutamate: asparagine 324 and glycine 326. Threonine 327 serves as a coordination point for 4-imidazolone-5-propanoate.

It belongs to the metallo-dependent hydrolases superfamily. HutI family. Zn(2+) serves as cofactor. Fe(3+) is required as a cofactor.

It is found in the cytoplasm. It catalyses the reaction 4-imidazolone-5-propanoate + H2O = N-formimidoyl-L-glutamate. It participates in amino-acid degradation; L-histidine degradation into L-glutamate; N-formimidoyl-L-glutamate from L-histidine: step 3/3. Functionally, catalyzes the hydrolytic cleavage of the carbon-nitrogen bond in imidazolone-5-propanoate to yield N-formimidoyl-L-glutamate. It is the third step in the universal histidine degradation pathway. This Chromobacterium violaceum (strain ATCC 12472 / DSM 30191 / JCM 1249 / CCUG 213 / NBRC 12614 / NCIMB 9131 / NCTC 9757 / MK) protein is Imidazolonepropionase.